A 342-amino-acid chain; its full sequence is Ketol-acid reductoisomerase (NADP(+)) (342 aa).

Residues 2 to 182 (AEMFYDDDAD…GGLRAGGIKT (181 aa)) enclose the KARI N-terminal Rossmann domain. NADP(+) is bound by residues 25–28 (FGSQ), Lys48, Ser51, Ser53, and 83–86 (DHLQ). Residue His108 is part of the active site. Position 134 (Gly134) interacts with NADP(+). The 146-residue stretch at 183–328 (TFTEETETDL…RELRKLMAWV (146 aa)) folds into the KARI C-terminal knotted domain. Mg(2+) contacts are provided by Asp191, Glu195, Glu227, and Glu231. Ser252 provides a ligand contact to substrate.

This sequence belongs to the ketol-acid reductoisomerase family. Mg(2+) serves as cofactor.

It carries out the reaction (2R)-2,3-dihydroxy-3-methylbutanoate + NADP(+) = (2S)-2-acetolactate + NADPH + H(+). The enzyme catalyses (2R,3R)-2,3-dihydroxy-3-methylpentanoate + NADP(+) = (S)-2-ethyl-2-hydroxy-3-oxobutanoate + NADPH + H(+). The protein operates within amino-acid biosynthesis; L-isoleucine biosynthesis; L-isoleucine from 2-oxobutanoate: step 2/4. It functions in the pathway amino-acid biosynthesis; L-valine biosynthesis; L-valine from pyruvate: step 2/4. Involved in the biosynthesis of branched-chain amino acids (BCAA). Catalyzes an alkyl-migration followed by a ketol-acid reduction of (S)-2-acetolactate (S2AL) to yield (R)-2,3-dihydroxy-isovalerate. In the isomerase reaction, S2AL is rearranged via a Mg-dependent methyl migration to produce 3-hydroxy-3-methyl-2-ketobutyrate (HMKB). In the reductase reaction, this 2-ketoacid undergoes a metal-dependent reduction by NADPH to yield (R)-2,3-dihydroxy-isovalerate. This Kineococcus radiotolerans (strain ATCC BAA-149 / DSM 14245 / SRS30216) protein is Ketol-acid reductoisomerase (NADP(+)).